A 48-amino-acid polypeptide reads, in one-letter code: GIFPKIIGKGIKTGIVNGIKSLVKGVGMKVFKAGLSNIGNTGCNEDEC.

Residues Cys43 and Cys48 are joined by a disulfide bond.

Expressed by the skin glands.

Its subcellular location is the secreted. Functionally, antimicrobial activity against Gram-negative bacterium E.coli. The chain is Palustrin-3b from Lithobates palustris (Pickerel frog).